We begin with the raw amino-acid sequence, 116 residues long: Large ribosomal subunit protein bL19 (116 aa).

The protein belongs to the bacterial ribosomal protein bL19 family.

In terms of biological role, this protein is located at the 30S-50S ribosomal subunit interface and may play a role in the structure and function of the aminoacyl-tRNA binding site. This chain is Large ribosomal subunit protein bL19, found in Azotobacter vinelandii (strain DJ / ATCC BAA-1303).